We begin with the raw amino-acid sequence, 406 residues long: Transcriptional activator NprA (406 aa).

4 TPR repeats span residues 125–158, 206–239, 246–279, and 285–318; these read YYYYKFLGLLYYCKEKYEDALEYYKKAEQRFRSQ, AECHILLGICYRRYGEVDQAIECYSLAHKIAQII, GTIEHNLGYLMSMKHEHYEAIQHYKKSLLYKRNS, and FITLFSLIKEYYVSKNYKKALANVEESLQLLKRE.

Functionally, activates the transcription of nprS by about five fold. May bind to the upstream region of nprS promoter. This chain is Transcriptional activator NprA (nprA), found in Geobacillus stearothermophilus (Bacillus stearothermophilus).